A 280-amino-acid chain; its full sequence is Pantothenate synthetase (280 aa).

Methionine 30–histidine 37 contributes to the ATP binding site. Histidine 37 acts as the Proton donor in catalysis. A (R)-pantoate-binding site is contributed by glutamine 61. Beta-alanine is bound at residue glutamine 61. Glycine 147–aspartate 150 provides a ligand contact to ATP. Glutamine 153 contributes to the (R)-pantoate binding site. Residues valine 176 and methionine 184–arginine 187 each bind ATP.

The protein belongs to the pantothenate synthetase family. Homodimer.

It is found in the cytoplasm. The enzyme catalyses (R)-pantoate + beta-alanine + ATP = (R)-pantothenate + AMP + diphosphate + H(+). It participates in cofactor biosynthesis; (R)-pantothenate biosynthesis; (R)-pantothenate from (R)-pantoate and beta-alanine: step 1/1. Catalyzes the condensation of pantoate with beta-alanine in an ATP-dependent reaction via a pantoyl-adenylate intermediate. In Sulfurihydrogenibium sp. (strain YO3AOP1), this protein is Pantothenate synthetase.